An 89-amino-acid polypeptide reads, in one-letter code: Putative regulatory protein CYA_2696 (89 aa).

This sequence belongs to the RemA family.

The sequence is that of Putative regulatory protein CYA_2696 from Synechococcus sp. (strain JA-3-3Ab) (Cyanobacteria bacterium Yellowstone A-Prime).